A 291-amino-acid chain; its full sequence is Alpha/beta-gliadin A-II (291 aa).

The signal sequence occupies residues 1–20 (MKTFPILALLAIVATTATTA). Residues 32-55 (NPSQQQPQEQVPLVQEQQFQGQQQ) are compositionally biased toward low complexity. Disordered stretches follow at residues 32 to 120 (NPSQ…QQQQ) and 227 to 250 (QQYPSGQGFFQPSQQNPQAQGSFQ). 2 stretches are compositionally biased toward pro residues: residues 56 to 71 (PFPPQQPYPQPQPFPS) and 81 to 104 (FPQPQLPYPQPQPFRPQQPYPQPQ). Low complexity-rich tracts occupy residues 105 to 120 (PQYSQPQQPISQQQQQ) and 227 to 237 (QQYPSGQGFFQ). The segment covering 238 to 250 (PSQQNPQAQGSFQ) has biased composition (polar residues).

The protein belongs to the gliadin/glutenin family. Post-translationally, substrate of transglutaminase.

Functionally, gliadin is the major seed storage protein in wheat. The polypeptide is Alpha/beta-gliadin A-II (Triticum aestivum (Wheat)).